The sequence spans 63 residues: Large ribosomal subunit protein bL28c (63 aa).

It belongs to the bacterial ribosomal protein bL28 family.

It is found in the plastid. Its subcellular location is the chloroplast. The polypeptide is Large ribosomal subunit protein bL28c (Pyropia yezoensis (Susabi-nori)).